Here is a 477-residue protein sequence, read N- to C-terminus: Bifunctional protein HldE (477 aa).

Residues 1-319 (MTPPLPGFRD…AALGGGPAPA (319 aa)) are ribokinase. 195–198 (NLAE) lines the ATP pocket. Residue aspartate 264 is part of the active site. The cytidylyltransferase stretch occupies residues 346 to 477 (MTNGCFDLLH…DLIARIRSRG (132 aa)).

In the N-terminal section; belongs to the carbohydrate kinase PfkB family. It in the C-terminal section; belongs to the cytidylyltransferase family. Homodimer.

It catalyses the reaction D-glycero-beta-D-manno-heptose 7-phosphate + ATP = D-glycero-beta-D-manno-heptose 1,7-bisphosphate + ADP + H(+). The enzyme catalyses D-glycero-beta-D-manno-heptose 1-phosphate + ATP + H(+) = ADP-D-glycero-beta-D-manno-heptose + diphosphate. Its pathway is nucleotide-sugar biosynthesis; ADP-L-glycero-beta-D-manno-heptose biosynthesis; ADP-L-glycero-beta-D-manno-heptose from D-glycero-beta-D-manno-heptose 7-phosphate: step 1/4. The protein operates within nucleotide-sugar biosynthesis; ADP-L-glycero-beta-D-manno-heptose biosynthesis; ADP-L-glycero-beta-D-manno-heptose from D-glycero-beta-D-manno-heptose 7-phosphate: step 3/4. Its function is as follows. Catalyzes the phosphorylation of D-glycero-D-manno-heptose 7-phosphate at the C-1 position to selectively form D-glycero-beta-D-manno-heptose-1,7-bisphosphate. In terms of biological role, catalyzes the ADP transfer from ATP to D-glycero-beta-D-manno-heptose 1-phosphate, yielding ADP-D-glycero-beta-D-manno-heptose. The polypeptide is Bifunctional protein HldE (Halorhodospira halophila (strain DSM 244 / SL1) (Ectothiorhodospira halophila (strain DSM 244 / SL1))).